The sequence spans 255 residues: 2-succinyl-6-hydroxy-2,4-cyclohexadiene-1-carboxylate synthase (255 aa).

Belongs to the AB hydrolase superfamily. MenH family. In terms of assembly, monomer.

The enzyme catalyses 5-enolpyruvoyl-6-hydroxy-2-succinyl-cyclohex-3-ene-1-carboxylate = (1R,6R)-6-hydroxy-2-succinyl-cyclohexa-2,4-diene-1-carboxylate + pyruvate. Its pathway is quinol/quinone metabolism; 1,4-dihydroxy-2-naphthoate biosynthesis; 1,4-dihydroxy-2-naphthoate from chorismate: step 3/7. The protein operates within quinol/quinone metabolism; menaquinone biosynthesis. Its function is as follows. Catalyzes a proton abstraction reaction that results in 2,5-elimination of pyruvate from 2-succinyl-5-enolpyruvyl-6-hydroxy-3-cyclohexene-1-carboxylate (SEPHCHC) and the formation of 2-succinyl-6-hydroxy-2,4-cyclohexadiene-1-carboxylate (SHCHC). The protein is 2-succinyl-6-hydroxy-2,4-cyclohexadiene-1-carboxylate synthase of Serratia proteamaculans (strain 568).